Consider the following 76-residue polypeptide: Small ribosomal subunit protein bS18 (76 aa).

The protein belongs to the bacterial ribosomal protein bS18 family. In terms of assembly, part of the 30S ribosomal subunit. Forms a tight heterodimer with protein bS6.

In terms of biological role, binds as a heterodimer with protein bS6 to the central domain of the 16S rRNA, where it helps stabilize the platform of the 30S subunit. The chain is Small ribosomal subunit protein bS18 from Xanthomonas euvesicatoria pv. vesicatoria (strain 85-10) (Xanthomonas campestris pv. vesicatoria).